Reading from the N-terminus, the 299-residue chain is Protoheme IX farnesyltransferase 1 (299 aa).

8 helical membrane-spanning segments follow: residues 25–45 (VVVL…RAGV), 47–67 (WTVL…AAAV), 95–115 (TGAL…LLTF), 119–139 (LTAW…TGFL), 147–167 (IVIG…AATG), 173–193 (PLLL…ALAI), 226–246 (ALLA…LYLI), and 279–299 (IWYL…LLNL).

This sequence belongs to the UbiA prenyltransferase family. Protoheme IX farnesyltransferase subfamily.

The protein localises to the cell inner membrane. The catalysed reaction is heme b + (2E,6E)-farnesyl diphosphate + H2O = Fe(II)-heme o + diphosphate. It participates in porphyrin-containing compound metabolism; heme O biosynthesis; heme O from protoheme: step 1/1. Functionally, converts heme B (protoheme IX) to heme O by substitution of the vinyl group on carbon 2 of heme B porphyrin ring with a hydroxyethyl farnesyl side group. This is Protoheme IX farnesyltransferase 1 from Pseudomonas fluorescens (strain Pf0-1).